Consider the following 111-residue polypeptide: Cytochrome b-c1 complex subunit 7 (111 aa).

The residue at position 2 (A2) is an N-acetylalanine. The residue at position 12 (K12) is an N6-acetyllysine; alternate. The residue at position 12 (K12) is an N6-succinyllysine; alternate. K19 bears the N6-acetyllysine mark. At K78 the chain carries N6-acetyllysine; alternate. Position 78 is an N6-succinyllysine; alternate (K78). 2 positions are modified to N6-acetyllysine: K83 and K96.

Belongs to the UQCRB/QCR7 family. Component of the ubiquinol-cytochrome c oxidoreductase (cytochrome b-c1 complex, complex III, CIII), a multisubunit enzyme composed of 11 subunits. The complex is composed of 3 respiratory subunits cytochrome b, cytochrome c1 and Rieske protein UQCRFS1, 2 core protein subunits UQCRC1/QCR1 and UQCRC2/QCR2, and 6 low-molecular weight protein subunits UQCRH/QCR6, UQCRB/QCR7, UQCRQ/QCR8, UQCR10/QCR9, UQCR11/QCR10 and subunit 9, the cleavage product of Rieske protein UQCRFS1. The complex exists as an obligatory dimer and forms supercomplexes (SCs) in the inner mitochondrial membrane with NADH-ubiquinone oxidoreductase (complex I, CI) and cytochrome c oxidase (complex IV, CIV), resulting in different assemblies (supercomplex SCI(1)III(2)IV(1) and megacomplex MCI(2)III(2)IV(2)).

It localises to the mitochondrion inner membrane. In terms of biological role, component of the ubiquinol-cytochrome c oxidoreductase, a multisubunit transmembrane complex that is part of the mitochondrial electron transport chain which drives oxidative phosphorylation. The respiratory chain contains 3 multisubunit complexes succinate dehydrogenase (complex II, CII), ubiquinol-cytochrome c oxidoreductase (cytochrome b-c1 complex, complex III, CIII) and cytochrome c oxidase (complex IV, CIV), that cooperate to transfer electrons derived from NADH and succinate to molecular oxygen, creating an electrochemical gradient over the inner membrane that drives transmembrane transport and the ATP synthase. The cytochrome b-c1 complex catalyzes electron transfer from ubiquinol to cytochrome c, linking this redox reaction to translocation of protons across the mitochondrial inner membrane, with protons being carried across the membrane as hydrogens on the quinol. In the process called Q cycle, 2 protons are consumed from the matrix, 4 protons are released into the intermembrane space and 2 electrons are passed to cytochrome c. The protein is Cytochrome b-c1 complex subunit 7 (UQCRB) of Pongo abelii (Sumatran orangutan).